We begin with the raw amino-acid sequence, 59 residues long: Conotoxin ViVA (59 aa).

The N-terminal stretch at 1–19 is a signal peptide; the sequence is MRCVPVFIILLLLIPSASS. The propeptide occupies 20 to 46; the sequence is AAVQPKTEKDDVPLASVHDSALRILSR. Gln47 is modified (pyrrolidone carboxylic acid). Disulfide bonds link Cys48-Cys55 and Cys49-Cys56. Ile58 carries the isoleucine amide modification.

The protein belongs to the conotoxin T superfamily. As to expression, expressed by the venom duct.

It localises to the secreted. The sequence is that of Conotoxin ViVA from Conus virgo (Virgin cone).